Reading from the N-terminus, the 46-residue chain is Mu-segestritoxin-Sf1g (46 aa).

Intrachain disulfides connect Cys3–Cys19, Cys10–Cys22, Cys18–Cys42, and Cys24–Cys40. The interval 31-33 (RPW) is keys region for toxin activity.

Belongs to the neurotoxin 16 (SFI) family. In terms of tissue distribution, expressed by the venom gland.

Its subcellular location is the secreted. Functionally, insecticidal toxin. It inhibits insect voltage-gated sodium channels (Nav) by partially blocking the channel pore in DUM neurons from the American cockroach, not by acting as a gating modifier. The inhibition is only partially reversible after prolonged washout. In vivo, the toxin causes flaccid paralysis followed by death when injected into Heliothis virescens larvae. It also causes uncoordinated movements followed by full paralysis to sheep blowflies (Lucilia cuprina). When the toxin is fused to snowdrop lectin, it is orally active against larvae of the tomato moth (Laconobia oleracea), the rice brown planthopper (Nilaparvata lugens), and the peach-potato aphid (Myzus persicae). The polypeptide is Mu-segestritoxin-Sf1g (Segestria florentina (Tube-web spider)).